Consider the following 359-residue polypeptide: Gene 58 protein (359 aa).

Helical transmembrane passes span Thr-12–Phe-32, Val-45–Phe-65, Tyr-75–Gln-95, Tyr-103–Phe-123, Tyr-132–Leu-152, Phe-154–Leu-174, Leu-220–Tyr-240, Val-246–Tyr-266, Ala-271–Leu-289, Ser-296–Leu-318, and Ile-330–Tyr-350.

Belongs to the herpesviridae BMRF2 family.

It is found in the host membrane. This Equine herpesvirus 2 (strain 86/87) (EHV-2) protein is Gene 58 protein (58).